The sequence spans 92 residues: Small ribosomal subunit protein uS19 (92 aa).

Belongs to the universal ribosomal protein uS19 family.

Its function is as follows. Protein S19 forms a complex with S13 that binds strongly to the 16S ribosomal RNA. In Pelobacter propionicus (strain DSM 2379 / NBRC 103807 / OttBd1), this protein is Small ribosomal subunit protein uS19.